We begin with the raw amino-acid sequence, 73 residues long: Ubiquitin-like modifier HUB1 (73 aa).

The Ubiquitin-like domain maps to 1 to 73; it reads MIEVVVNDRL…DQTNLELYYL (73 aa).

Its function is as follows. Forms conjugate with SPH1 and HBT1. Involved in morphogenesis. This Saccharomyces cerevisiae (strain ATCC 204508 / S288c) (Baker's yeast) protein is Ubiquitin-like modifier HUB1 (HUB1).